The primary structure comprises 546 residues: CTP synthase (546 aa).

An amidoligase domain region spans residues 1 to 267; that stretch reads MSKFVFVTGG…AQQTLELLNL (267 aa). Position 13 (S13) interacts with CTP. S13 is a UTP binding site. ATP contacts are provided by residues 14–19 and D71; that span reads SIGKGI. Residues D71 and E141 each contribute to the Mg(2+) site. CTP contacts are provided by residues 148–150, 188–193, and K224; these read DIE and KTKPTQ. Residues 188–193 and K224 each bind UTP; that span reads KTKPTQ. Positions 292-534 constitute a Glutamine amidotransferase type-1 domain; it reads EIAIVGKYVQ…MKAALKGREE (243 aa). G354 is a binding site for L-glutamine. The active-site Nucleophile; for glutamine hydrolysis is C381. L-glutamine-binding positions include 382–385, E405, and R462; that span reads LGMQ. Catalysis depends on residues H507 and E509.

Belongs to the CTP synthase family. Homotetramer.

It carries out the reaction UTP + L-glutamine + ATP + H2O = CTP + L-glutamate + ADP + phosphate + 2 H(+). It catalyses the reaction L-glutamine + H2O = L-glutamate + NH4(+). The enzyme catalyses UTP + NH4(+) + ATP = CTP + ADP + phosphate + 2 H(+). The protein operates within pyrimidine metabolism; CTP biosynthesis via de novo pathway; CTP from UDP: step 2/2. Its activity is regulated as follows. Allosterically activated by GTP, when glutamine is the substrate; GTP has no effect on the reaction when ammonia is the substrate. The allosteric effector GTP functions by stabilizing the protein conformation that binds the tetrahedral intermediate(s) formed during glutamine hydrolysis. Inhibited by the product CTP, via allosteric rather than competitive inhibition. Functionally, catalyzes the ATP-dependent amination of UTP to CTP with either L-glutamine or ammonia as the source of nitrogen. Regulates intracellular CTP levels through interactions with the four ribonucleotide triphosphates. The protein is CTP synthase of Microcystis aeruginosa (strain NIES-843 / IAM M-2473).